A 317-amino-acid chain; its full sequence is Ribosomal RNA large subunit methyltransferase F (317 aa).

This sequence belongs to the methyltransferase superfamily. METTL16/RlmF family.

It localises to the cytoplasm. The enzyme catalyses adenosine(1618) in 23S rRNA + S-adenosyl-L-methionine = N(6)-methyladenosine(1618) in 23S rRNA + S-adenosyl-L-homocysteine + H(+). Specifically methylates the adenine in position 1618 of 23S rRNA. The protein is Ribosomal RNA large subunit methyltransferase F of Pseudomonas putida (strain ATCC 47054 / DSM 6125 / CFBP 8728 / NCIMB 11950 / KT2440).